The primary structure comprises 395 residues: Serine-type anaerobic sulfatase-maturating enzyme (395 aa).

One can recognise a Radical SAM core domain in the interval 18–249 (PRSPVPFHIL…QWRKRCDRGR (232 aa)). [4Fe-4S] cluster is bound by residues Cys35 and Cys39. Residue Tyr41 participates in S-adenosyl-L-methionine binding. A [4Fe-4S] cluster-binding site is contributed by Cys42. S-adenosyl-L-methionine contacts are provided by Gly84 and Arg152. Cys270, Cys276, and Cys291 together coordinate [4Fe-4S] cluster. Asp292 serves as the catalytic Proton acceptor. Residues Cys331, Cys334, Cys340, Cys344, and Cys357 each contribute to the [4Fe-4S] cluster site.

This sequence belongs to the radical SAM superfamily. Anaerobic sulfatase-maturating enzyme family. In terms of assembly, monomer. Interacts with AtsA prior to its export to the periplasm. This interaction depends on the presence of AtsA 'Ser-72'. Binding of SAM to AtsB promotes the formation of a ternary AtsA-AtsB-SAM complex. [4Fe-4S] cluster is required as a cofactor.

It is found in the cytoplasm. The enzyme catalyses L-seryl-[sulfatase] + S-adenosyl-L-methionine = 3-oxo-L-alanyl-[sulfatase] + 5'-deoxyadenosine + L-methionine + H(+). Its pathway is protein modification; sulfatase oxidation. With respect to regulation, activity is inhibited by iron chelators. In terms of biological role, involved in 'Ser-type' sulfatase maturation under anaerobic conditions. Catalyzes the post-translational modification of serine ('Ser-72' in the arylsulfatase AtsA) into 3-oxoalanine (also known as C(alpha)-formylglycine (FGly)), by a free radical chemical mechanism initiated via the reductive cleavage of S-adenosyl-L-methionine (SAM). Is capable of catalyzing multiple turnovers. In vitro, use of a peptide substrate in which the target serine is changed to cysteine also gives rise to turnover, supporting approximately 4-fold the activity of that observed with the natural substrate. In Klebsiella pneumoniae, this protein is Serine-type anaerobic sulfatase-maturating enzyme.